Reading from the N-terminus, the 57-residue chain is Cecropin-A (57 aa).

An N-terminal signal peptide occupies residues 1–21 (IFFFVFACLLALSAVSAAPEP).

It belongs to the cecropin family.

The protein localises to the secreted. Its function is as follows. Cecropins have lytic and antibacterial activity against several Gram-positive and Gram-negative bacteria. The protein is Cecropin-A (CECA) of Spodoptera litura (Asian cotton leafworm).